We begin with the raw amino-acid sequence, 155 residues long: Putative pre-16S rRNA nuclease (155 aa).

This sequence belongs to the YqgF nuclease family.

It is found in the cytoplasm. Its function is as follows. Could be a nuclease involved in processing of the 5'-end of pre-16S rRNA. The polypeptide is Putative pre-16S rRNA nuclease (Wolbachia sp. subsp. Brugia malayi (strain TRS)).